We begin with the raw amino-acid sequence, 162 residues long: Cyclic pyranopterin monophosphate synthase (162 aa).

Substrate-binding positions include 75–77 and 113–114; these read LCH and ME. Residue D128 is part of the active site.

The protein belongs to the MoaC family. In terms of assembly, homohexamer; trimer of dimers.

The catalysed reaction is (8S)-3',8-cyclo-7,8-dihydroguanosine 5'-triphosphate = cyclic pyranopterin phosphate + diphosphate. Its pathway is cofactor biosynthesis; molybdopterin biosynthesis. Catalyzes the conversion of (8S)-3',8-cyclo-7,8-dihydroguanosine 5'-triphosphate to cyclic pyranopterin monophosphate (cPMP). The chain is Cyclic pyranopterin monophosphate synthase from Burkholderia ambifaria (strain ATCC BAA-244 / DSM 16087 / CCUG 44356 / LMG 19182 / AMMD) (Burkholderia cepacia (strain AMMD)).